The primary structure comprises 190 residues: B3 domain-containing protein At4g01580 (190 aa).

Residues 1-25 (MVITRNMKARATSVSHRQSQQDPES) form a disordered region. Residues 12 to 23 (TSVSHRQSQQDP) show a composition bias toward polar residues. The segment at residues 29-122 (KFFKLVLPST…SFRVIIFNAS (94 aa)) is a DNA-binding region (TF-B3).

The protein localises to the nucleus. The protein is B3 domain-containing protein At4g01580 of Arabidopsis thaliana (Mouse-ear cress).